Consider the following 338-residue polypeptide: NADH-quinone oxidoreductase subunit H (338 aa).

8 helical membrane passes run 22-42 (VVQAVVILLVVVLVAALMSFI), 96-116 (VAMATAVLSFMVIPVSPALGV), 121-141 (IGLLFFMAMAGIAVYAVLFGG), 161-181 (ISYEVFLGISLMGVVAIAGSF), 193-213 (VWFIIPQFLGFLIFVVAGVAV), 249-269 (YVNVVLISALIVTLFFGGWLA), 277-297 (FVPPVFWFVIKTAFFVMMFVL), and 315-335 (WKICLPLALVNLLVTGAVILM).

Belongs to the complex I subunit 1 family. In terms of assembly, NDH-1 is composed of 14 different subunits. Subunits NuoA, H, J, K, L, M, N constitute the membrane sector of the complex.

It is found in the cell inner membrane. It carries out the reaction a quinone + NADH + 5 H(+)(in) = a quinol + NAD(+) + 4 H(+)(out). Functionally, NDH-1 shuttles electrons from NADH, via FMN and iron-sulfur (Fe-S) centers, to quinones in the respiratory chain. The immediate electron acceptor for the enzyme in this species is believed to be ubiquinone. Couples the redox reaction to proton translocation (for every two electrons transferred, four hydrogen ions are translocated across the cytoplasmic membrane), and thus conserves the redox energy in a proton gradient. This subunit may bind ubiquinone. The protein is NADH-quinone oxidoreductase subunit H of Acinetobacter baumannii (strain ATCC 17978 / DSM 105126 / CIP 53.77 / LMG 1025 / NCDC KC755 / 5377).